We begin with the raw amino-acid sequence, 234 residues long: MAERGYSFSLTTFSPSGKLVQIEYALAAVAGGAPSVGIKAANGVVLATEKKQKSILYDERSVHKVEPITKHIGLVYSGMGPDYRVLVHRARKLAQQYYLVYQEPIPTAQLVQRVASVMQEYTQSGGVRPFGVSLLICGWNEGRPYLFQSDPSGAYFAWKATAMGKNYVNGKTFLEKRYNEDLELEDAIHTAILTLKESFEGQMTEDNIEVGICNEAGFRRLTPTEVKDYLAAIA.

An N-acetylalanine modification is found at A2. Y6 bears the Phosphotyrosine mark. Phosphoserine occurs at positions 7, 14, and 16. At Y24 the chain carries Phosphotyrosine. K70 is subject to N6-acetyllysine. Y76 and Y121 each carry phosphotyrosine. K171 bears the N6-acetyllysine mark.

The protein belongs to the peptidase T1A family. The 26S proteasome consists of a 20S proteasome core and two 19S regulatory subunits. The 20S proteasome core is a barrel-shaped complex made of 28 subunits that are arranged in four stacked rings. The two outer rings are each formed by seven alpha subunits, and the two inner rings are formed by seven beta subunits. The proteolytic activity is exerted by three beta-subunits PSMB5, PSMB6 and PSMB7. Post-translationally, phosphorylated on tyrosine residues; which may be important for nuclear import.

It localises to the cytoplasm. The protein resides in the nucleus. Functionally, component of the 20S core proteasome complex involved in the proteolytic degradation of most intracellular proteins. This complex plays numerous essential roles within the cell by associating with different regulatory particles. Associated with two 19S regulatory particles, forms the 26S proteasome and thus participates in the ATP-dependent degradation of ubiquitinated proteins. The 26S proteasome plays a key role in the maintenance of protein homeostasis by removing misfolded or damaged proteins that could impair cellular functions, and by removing proteins whose functions are no longer required. Associated with the PA200 or PA28, the 20S proteasome mediates ubiquitin-independent protein degradation. This type of proteolysis is required in several pathways including spermatogenesis (20S-PA200 complex) or generation of a subset of MHC class I-presented antigenic peptides (20S-PA28 complex). The chain is Proteasome subunit alpha type-2 (PSMA2) from Bos taurus (Bovine).